A 953-amino-acid chain; its full sequence is Isoleucine--tRNA ligase (953 aa).

The 'HIGH' region signature appears at 58-68; the sequence is PYANGFIHLGH. Glu-573 serves as a coordination point for L-isoleucyl-5'-AMP. The short motif at 614–618 is the 'KMSKS' region element; it reads KMSKS. Lys-617 provides a ligand contact to ATP. Cys-916, Cys-919, Cys-936, and Cys-939 together coordinate Zn(2+).

Belongs to the class-I aminoacyl-tRNA synthetase family. IleS type 1 subfamily. Monomer. Requires Zn(2+) as cofactor.

It localises to the cytoplasm. It catalyses the reaction tRNA(Ile) + L-isoleucine + ATP = L-isoleucyl-tRNA(Ile) + AMP + diphosphate. Catalyzes the attachment of isoleucine to tRNA(Ile). As IleRS can inadvertently accommodate and process structurally similar amino acids such as valine, to avoid such errors it has two additional distinct tRNA(Ile)-dependent editing activities. One activity is designated as 'pretransfer' editing and involves the hydrolysis of activated Val-AMP. The other activity is designated 'posttransfer' editing and involves deacylation of mischarged Val-tRNA(Ile). In Blochmanniella floridana, this protein is Isoleucine--tRNA ligase.